We begin with the raw amino-acid sequence, 74 residues long: Anionic peptide clone 8 (74 aa).

The N-terminal stretch at 1-24 is a signal peptide; that stretch reads MVSKSLIVLLLVSVLVSTFFTTEA.

This sequence belongs to the non-disulfide-bridged peptide (NDBP) superfamily. Long chain multifunctional peptide (group 2) family. Expressed by the venom gland.

The protein resides in the secreted. Its function is as follows. May be an antimicrobial peptide. This is Anionic peptide clone 8 from Tityus costatus (Brazilian scorpion).